Consider the following 310-residue polypeptide: Porphobilinogen deaminase (310 aa).

Residue Cys-242 is modified to S-(dipyrrolylmethanemethyl)cysteine.

It belongs to the HMBS family. Monomer. The cofactor is dipyrromethane.

The enzyme catalyses 4 porphobilinogen + H2O = hydroxymethylbilane + 4 NH4(+). The protein operates within porphyrin-containing compound metabolism; protoporphyrin-IX biosynthesis; coproporphyrinogen-III from 5-aminolevulinate: step 2/4. In terms of biological role, tetrapolymerization of the monopyrrole PBG into the hydroxymethylbilane pre-uroporphyrinogen in several discrete steps. This Alcanivorax borkumensis (strain ATCC 700651 / DSM 11573 / NCIMB 13689 / SK2) protein is Porphobilinogen deaminase.